We begin with the raw amino-acid sequence, 235 residues long: Small ribosomal subunit protein uS2c (235 aa).

Belongs to the universal ribosomal protein uS2 family.

The protein resides in the plastid. The protein localises to the chloroplast. The polypeptide is Small ribosomal subunit protein uS2c (rps2) (Adiantum capillus-veneris (Maidenhair fern)).